A 149-amino-acid chain; its full sequence is MTSFKLVKYTPRIKKKKSGLRKLARKVPTDRLLKFERVFKAQKRIHMSVFKVQRVLDEIRWRYYEETVMILNLMPYRASYPILKLVYSAAANATHYRDFDKANLFITKAEVSRSTIMNKFRPRARGRSSPIKKTMCHITIVLNIVKKSK.

It belongs to the universal ribosomal protein uL22 family. In terms of assembly, part of the 50S ribosomal subunit.

Its subcellular location is the plastid. The protein localises to the chloroplast. Functionally, this protein binds specifically to 23S rRNA. Its function is as follows. The globular domain of the protein is located near the polypeptide exit tunnel on the outside of the subunit, while an extended beta-hairpin is found that lines the wall of the exit tunnel in the center of the 70S ribosome. The chain is Large ribosomal subunit protein uL22c (rpl22) from Oryza nivara (Indian wild rice).